The sequence spans 175 residues: Peptide methionine sulfoxide reductase MsrA (175 aa).

Cys-10 is an active-site residue.

Belongs to the MsrA Met sulfoxide reductase family.

The enzyme catalyses L-methionyl-[protein] + [thioredoxin]-disulfide + H2O = L-methionyl-(S)-S-oxide-[protein] + [thioredoxin]-dithiol. The catalysed reaction is [thioredoxin]-disulfide + L-methionine + H2O = L-methionine (S)-S-oxide + [thioredoxin]-dithiol. Its function is as follows. Has an important function as a repair enzyme for proteins that have been inactivated by oxidation. Catalyzes the reversible oxidation-reduction of methionine sulfoxide in proteins to methionine. The sequence is that of Peptide methionine sulfoxide reductase MsrA from Clavibacter sepedonicus (Clavibacter michiganensis subsp. sepedonicus).